The sequence spans 399 residues: Formate-dependent phosphoribosylglycinamide formyltransferase (399 aa).

N(1)-(5-phospho-beta-D-ribosyl)glycinamide-binding positions include Glu-22 to Leu-23 and Glu-82. ATP is bound by residues Arg-115, Lys-157, Ser-162–Gln-167, Glu-197–Val-200, and Glu-205. The 196-residue stretch at Arg-120–Leu-315 folds into the ATP-grasp domain. Residues Glu-274 and Glu-286 each coordinate Mg(2+). Residues Asp-293, Lys-362, and Arg-369–Arg-370 each bind N(1)-(5-phospho-beta-D-ribosyl)glycinamide.

Belongs to the PurK/PurT family. Homodimer.

It carries out the reaction N(1)-(5-phospho-beta-D-ribosyl)glycinamide + formate + ATP = N(2)-formyl-N(1)-(5-phospho-beta-D-ribosyl)glycinamide + ADP + phosphate + H(+). The protein operates within purine metabolism; IMP biosynthesis via de novo pathway; N(2)-formyl-N(1)-(5-phospho-D-ribosyl)glycinamide from N(1)-(5-phospho-D-ribosyl)glycinamide (formate route): step 1/1. Functionally, involved in the de novo purine biosynthesis. Catalyzes the transfer of formate to 5-phospho-ribosyl-glycinamide (GAR), producing 5-phospho-ribosyl-N-formylglycinamide (FGAR). Formate is provided by PurU via hydrolysis of 10-formyl-tetrahydrofolate. This chain is Formate-dependent phosphoribosylglycinamide formyltransferase, found in Thioalkalivibrio sulfidiphilus (strain HL-EbGR7).